Reading from the N-terminus, the 292-residue chain is Polyamine aminopropyltransferase 1 (292 aa).

Residues 1-244 form the PABS domain; it reads MELGMFRLNI…YVNSFVFASD (244 aa). Glutamine 35 provides a ligand contact to S-methyl-5'-thioadenosine. Positions 66 and 90 each coordinate spermidine. Residues aspartate 110 and 142–143 each bind S-methyl-5'-thioadenosine; that span reads DG. Aspartate 163 functions as the Proton acceptor in the catalytic mechanism.

The protein belongs to the spermidine/spermine synthase family. As to quaternary structure, homodimer or homotetramer.

It localises to the cytoplasm. It carries out the reaction norspermine + S-adenosyl 3-(methylsulfanyl)propylamine = caldopentamine + S-methyl-5'-thioadenosine + 2 H(+). It catalyses the reaction norspermidine + S-adenosyl 3-(methylsulfanyl)propylamine = norspermine + S-methyl-5'-thioadenosine + H(+). The enzyme catalyses S-adenosyl 3-(methylsulfanyl)propylamine + spermidine = thermospermine + S-methyl-5'-thioadenosine + H(+). Involved in the biosynthesis of polyamines which are thought to support the growth of thermophilic microorganisms under high-temperature conditions. It seems that long-chain and branched-chain of polyamines effectively stabilize DNA and RNA, respectively. Catalyzes the irreversible transfer of a propylamine group from the amino donor S-adenosylmethioninamine (decarboxy-AdoMet) to norspermidine, spermidine and norspermine to yield norspermine, thermospermine and caldopentamine, respectively. It can also synthesize sym-norspermidine (bis(3-aminopropyl)amine) from 1,3-diaminopropane with a very low activity. The biosynthesis of caldohexamine and caldoheptamine from caldopentamine has been also observed. The sequence is that of Polyamine aminopropyltransferase 1 from Hyperthermus butylicus (strain DSM 5456 / JCM 9403 / PLM1-5).